Reading from the N-terminus, the 397-residue chain is Tryptophan synthase beta chain (397 aa).

Lys-87 carries the post-translational modification N6-(pyridoxal phosphate)lysine.

Belongs to the TrpB family. As to quaternary structure, tetramer of two alpha and two beta chains. Pyridoxal 5'-phosphate is required as a cofactor.

The enzyme catalyses (1S,2R)-1-C-(indol-3-yl)glycerol 3-phosphate + L-serine = D-glyceraldehyde 3-phosphate + L-tryptophan + H2O. It participates in amino-acid biosynthesis; L-tryptophan biosynthesis; L-tryptophan from chorismate: step 5/5. Its function is as follows. The beta subunit is responsible for the synthesis of L-tryptophan from indole and L-serine. In Escherichia coli O17:K52:H18 (strain UMN026 / ExPEC), this protein is Tryptophan synthase beta chain.